Consider the following 256-residue polypeptide: MSMLTIGGKSFQSRLLLGTGKYPSFDIQKEAVAVSESDILTFAVRRMNIFEASQPNFLEQLDLSKYTLLPNTAGASTAEEAVRIARLAKASGLCDMIKVEVIGCSRSLLPDPVETLKASEQLLEEGFIVLPYTSDDVVLARKLEELGVHAIMPGASPIGSGQGILNPLNLSFIIEQAKVPVIVDAGIGSPKDAAYAMELGADGVLLNTAVSGADDPVKMARAMKLAVEAGRLSYEAGRIPLKQYGTASSPGEGLPV.

Lys-98 (schiff-base intermediate with DXP) is an active-site residue. 1-deoxy-D-xylulose 5-phosphate-binding positions include Gly-159, 185–186, and 207–208; these read AG and NT.

The protein belongs to the ThiG family. As to quaternary structure, homotetramer. Forms heterodimers with either ThiH or ThiS.

The protein resides in the cytoplasm. The catalysed reaction is [ThiS sulfur-carrier protein]-C-terminal-Gly-aminoethanethioate + 2-iminoacetate + 1-deoxy-D-xylulose 5-phosphate = [ThiS sulfur-carrier protein]-C-terminal Gly-Gly + 2-[(2R,5Z)-2-carboxy-4-methylthiazol-5(2H)-ylidene]ethyl phosphate + 2 H2O + H(+). Its pathway is cofactor biosynthesis; thiamine diphosphate biosynthesis. Its function is as follows. Catalyzes the rearrangement of 1-deoxy-D-xylulose 5-phosphate (DXP) to produce the thiazole phosphate moiety of thiamine. Sulfur is provided by the thiocarboxylate moiety of the carrier protein ThiS. In vitro, sulfur can be provided by H(2)S. This is Thiazole synthase (thiG) from Bacillus subtilis (strain 168).